The chain runs to 446 residues: Glutamyl-tRNA reductase (446 aa).

Substrate-binding positions include 49–52 (TCNR), Ser-108, 113–115 (ETQ), and Gln-119. Cys-50 serves as the catalytic Nucleophile. NADP(+) is bound at residue 188–193 (GAGKMS).

This sequence belongs to the glutamyl-tRNA reductase family. As to quaternary structure, homodimer.

The enzyme catalyses (S)-4-amino-5-oxopentanoate + tRNA(Glu) + NADP(+) = L-glutamyl-tRNA(Glu) + NADPH + H(+). Its pathway is porphyrin-containing compound metabolism; protoporphyrin-IX biosynthesis; 5-aminolevulinate from L-glutamyl-tRNA(Glu): step 1/2. Catalyzes the NADPH-dependent reduction of glutamyl-tRNA(Glu) to glutamate 1-semialdehyde (GSA). The sequence is that of Glutamyl-tRNA reductase from Desulforudis audaxviator (strain MP104C).